Consider the following 270-residue polypeptide: 3-methyl-2-oxobutanoate hydroxymethyltransferase (270 aa).

Positions 43 and 82 each coordinate Mg(2+). Residues 43 to 44 (DS), D82, and K110 each bind 3-methyl-2-oxobutanoate. Position 112 (E112) interacts with Mg(2+). The active-site Proton acceptor is E179.

This sequence belongs to the PanB family. In terms of assembly, homodecamer; pentamer of dimers. It depends on Mg(2+) as a cofactor.

The protein localises to the cytoplasm. The catalysed reaction is 3-methyl-2-oxobutanoate + (6R)-5,10-methylene-5,6,7,8-tetrahydrofolate + H2O = 2-dehydropantoate + (6S)-5,6,7,8-tetrahydrofolate. Its pathway is cofactor biosynthesis; (R)-pantothenate biosynthesis; (R)-pantoate from 3-methyl-2-oxobutanoate: step 1/2. Functionally, catalyzes the reversible reaction in which hydroxymethyl group from 5,10-methylenetetrahydrofolate is transferred onto alpha-ketoisovalerate to form ketopantoate. The sequence is that of 3-methyl-2-oxobutanoate hydroxymethyltransferase from Psychrobacter sp. (strain PRwf-1).